Consider the following 407-residue polypeptide: Aurora kinase (407 aa).

2 disordered regions span residues Met1 to Ser43 and Glu66 to Lys137. 2 stretches are compositionally biased toward low complexity: residues Ser31 to Ser43 and Ser126 to Ser136. A Protein kinase domain is found at Phe147–Ile399. ATP contacts are provided by residues Lys157, Lys176, and Leu224–Ala227. Catalysis depends on Asp272, which acts as the Proton acceptor. ATP is bound at residue Asp290.

Belongs to the protein kinase superfamily. Ser/Thr protein kinase family.

Its subcellular location is the cytoplasm. The protein resides in the cytoskeleton. It localises to the spindle. It is found in the midbody. The protein localises to the microtubule organizing center. Its subcellular location is the centrosome. The protein resides in the nucleus. It localises to the chromosome. It is found in the centromere. The enzyme catalyses L-seryl-[protein] + ATP = O-phospho-L-seryl-[protein] + ADP + H(+). The catalysed reaction is L-threonyl-[protein] + ATP = O-phospho-L-threonyl-[protein] + ADP + H(+). With respect to regulation, cdc2 activity is required for activation. Its function is as follows. Serine/threonine protein kinase that contributes to the regulation of cell cycle progression. Involved in meiotic apparatus formation and polar body extrusion. Contributes to Plk1 activation and phosphorylation of histone H3 at 'Ser-10' during meiosis I. Required for accurate progression of early embryonic M phase. Involved in chromosome alignment and cleavage furrow formation during early embryonic cycles. May be involved in mitotic spindle formation and cytokinesis. This Patiria pectinifera (Starfish) protein is Aurora kinase.